The sequence spans 560 residues: Long-chain-fatty-acid--CoA ligase (560 aa).

Belongs to the ATP-dependent AMP-binding enzyme family.

The catalysed reaction is a long-chain fatty acid + ATP + CoA = a long-chain fatty acyl-CoA + AMP + diphosphate. This Bacillus subtilis (strain 168) protein is Long-chain-fatty-acid--CoA ligase (lcfA).